A 161-amino-acid chain; its full sequence is MNPVRKKRLYIVLAILCGVSIAVALALTALQENINLFYTPSQIANGEAPEGTRIRAGGLVEEGSVKRSPDTLEVDFVVTDGAHGVTIRYHGILPDLFREGQGIVALGRVNEDGVLVADEVLAKHDENYMPPEVMQALEKSGMMQKHNEAKAAKGYQQESAQ.

Over Met-1–Arg-8 the chain is Cytoplasmic. The chain crosses the membrane as a helical; Signal-anchor for type II membrane protein span at residues Leu-9–Ala-29. The Periplasmic portion of the chain corresponds to Leu-30–Gln-161. His-124 and Tyr-128 together coordinate heme.

This sequence belongs to the CcmE/CycJ family.

It is found in the cell inner membrane. In terms of biological role, heme chaperone required for the biogenesis of c-type cytochromes. Transiently binds heme delivered by CcmC and transfers the heme to apo-cytochromes in a process facilitated by CcmF and CcmH. The sequence is that of Cytochrome c-type biogenesis protein CcmE from Ectopseudomonas mendocina (strain ymp) (Pseudomonas mendocina).